Reading from the N-terminus, the 271-residue chain is Acyl-[acyl-carrier-protein]--UDP-N-acetylglucosamine O-acyltransferase (271 aa).

The protein belongs to the transferase hexapeptide repeat family. LpxA subfamily. Homotrimer.

It localises to the cytoplasm. The enzyme catalyses a (3R)-hydroxyacyl-[ACP] + UDP-N-acetyl-alpha-D-glucosamine = a UDP-3-O-[(3R)-3-hydroxyacyl]-N-acetyl-alpha-D-glucosamine + holo-[ACP]. Its pathway is glycolipid biosynthesis; lipid IV(A) biosynthesis; lipid IV(A) from (3R)-3-hydroxytetradecanoyl-[acyl-carrier-protein] and UDP-N-acetyl-alpha-D-glucosamine: step 1/6. Its function is as follows. Involved in the biosynthesis of lipid A, a phosphorylated glycolipid that anchors the lipopolysaccharide to the outer membrane of the cell. The polypeptide is Acyl-[acyl-carrier-protein]--UDP-N-acetylglucosamine O-acyltransferase (Ralstonia nicotianae (strain ATCC BAA-1114 / GMI1000) (Ralstonia solanacearum)).